Here is a 443-residue protein sequence, read N- to C-terminus: Xaa-Pro dipeptidase (443 aa).

The Mn(2+) site is built by Asp-246, Asp-257, His-339, Glu-384, and Glu-423.

The protein belongs to the peptidase M24B family. Bacterial-type prolidase subfamily. Mn(2+) is required as a cofactor.

It catalyses the reaction Xaa-L-Pro dipeptide + H2O = an L-alpha-amino acid + L-proline. Splits dipeptides with a prolyl residue in the C-terminal position. This Shigella flexneri serotype 5b (strain 8401) protein is Xaa-Pro dipeptidase.